Reading from the N-terminus, the 299-residue chain is Undecaprenyl-diphosphatase (299 aa).

8 helical membrane passes run 10–32 (LFSL…RNLV), 63–83 (PGVS…IAYF), 112–132 (LAIA…KLFW), 143–163 (LPSI…AESF), 178–198 (GFVV…RSGS), 213–233 (AARF…LVEL), 243–263 (GGVL…WLAI), and 276–296 (WIFV…WLSG).

Belongs to the UppP family.

It is found in the cell inner membrane. The enzyme catalyses di-trans,octa-cis-undecaprenyl diphosphate + H2O = di-trans,octa-cis-undecaprenyl phosphate + phosphate + H(+). Functionally, catalyzes the dephosphorylation of undecaprenyl diphosphate (UPP). Confers resistance to bacitracin. The protein is Undecaprenyl-diphosphatase of Prochlorococcus marinus (strain MIT 9313).